Reading from the N-terminus, the 291-residue chain is Malectin (291 aa).

Positions 1–30 (MLRPRGAEGTAVALLRLLLLLLLLGPKLRG) are cleaved as a signal peptide. Residues 31-268 (PGLGVVGAAG…TPNPYASDNS (238 aa)) lie on the Lumenal side of the membrane. 5 residues coordinate a carbohydrate: Y81, Y103, Y130, F131, and D200. Positions 220-264 (LQPHPGLEKKEEEEEEEEYDEGSNLKRQTNKNRVQSGPRTPNPYA) are disordered. The span at 230–240 (EEEEEEEEYDE) shows a compositional bias: acidic residues. Residues 244–264 (LKRQTNKNRVQSGPRTPNPYA) show a composition bias toward polar residues. A glycan (N-linked (GlcNAc...) asparagine) is linked at N267. A helical transmembrane segment spans residues 269–289 (SLMFPILVAFGVFIPTLFCLC). At 290–291 (RL) the chain is on the cytoplasmic side.

This sequence belongs to the malectin family. As to quaternary structure, interacts with the oligosaccharyltransferase (OST) complex.

The protein localises to the endoplasmic reticulum membrane. In terms of biological role, carbohydrate-binding protein with a strong ligand preference for Glc2-N-glycan. May play a role in the early steps of protein N-glycosylation. This is Malectin from Mus musculus (Mouse).